A 953-amino-acid polypeptide reads, in one-letter code: Probable isoleucine--tRNA ligase, cytoplasmic (953 aa).

Positions 45–55 (PFATGLPHYGH) match the 'HIGH' region motif. The 'KMSKS' region motif lies at 634–638 (KMSKR). Lys637 is an ATP binding site.

This sequence belongs to the class-I aminoacyl-tRNA synthetase family.

Its subcellular location is the cytoplasm. The catalysed reaction is tRNA(Ile) + L-isoleucine + ATP = L-isoleucyl-tRNA(Ile) + AMP + diphosphate. This is Probable isoleucine--tRNA ligase, cytoplasmic from Enterocytozoon bieneusi (strain H348) (Microsporidian parasite).